The sequence spans 187 residues: Small ribosomal subunit protein uS5 (187 aa).

Residues 1-20 are disordered; it reads MAERENRRDRRDDRSREETP. One can recognise an S5 DRBM domain in the interval 22 to 85; that stretch reads FADRLVAINR…EQAKRQMIRV (64 aa). The segment at 154-174 is disordered; the sequence is DGLKRESSPRQVAQRRGKKVA.

It belongs to the universal ribosomal protein uS5 family. In terms of assembly, part of the 30S ribosomal subunit. Contacts proteins S4 and S8.

Functionally, with S4 and S12 plays an important role in translational accuracy. Its function is as follows. Located at the back of the 30S subunit body where it stabilizes the conformation of the head with respect to the body. This chain is Small ribosomal subunit protein uS5, found in Cereibacter sphaeroides (strain ATCC 17025 / ATH 2.4.3) (Rhodobacter sphaeroides).